The sequence spans 125 residues: Ixonnexin (125 aa).

A signal peptide spans Met1 to Ala21. N-linked (GlcNAc...) asparagine glycosylation occurs at Asn26. Residues Thr81–Phe125 are disordered. A compositionally biased stretch (basic residues) spans Lys101–Lys119.

The protein belongs to the salp14 family. Homodimer. Interacts with host PLG. Interacts with host PLAT. As to expression, saliva (at protein level).

It localises to the secreted. In terms of biological role, salivary protein that promotes host fibrinolysis via accelerating host plasmin generation from plasminogen (PLG) initiated by tPA/tissue-type plasminogen activator (PLAT). Does not affect urokinase (PLAU)-mediated fibrinolysis in the host. Enhances amidolytic activity of host coagulation factor Xa (F10). The chain is Ixonnexin from Ixodes scapularis (Black-legged tick).